Consider the following 1325-residue polypeptide: ATP-binding cassette sub-family C member 4 (1325 aa).

6 helical membrane-spanning segments follow: residues 93-113 (LILG…PLFL), 136-156 (GYAA…HLYF), 205-225 (FDQV…AIAV), 227-247 (VLLW…LVIL), 322-342 (ASFF…YVLL), and 351-371 (VFVA…FFPS). Positions 93-377 (LILGIFTLIE…FFPSAIERGS (285 aa)) constitute an ABC transmembrane type-1 1 domain. The ABC transporter 1 domain occupies 410-633 (VHVQDFTAFW…GVDFGSLLKK (224 aa)). 445 to 452 (GPVGAGKS) is a binding site for ATP. Phosphothreonine occurs at positions 646 and 648. Residues 657 to 667 (ASIWSQQSSRP) are compositionally biased toward polar residues. Residues 657-690 (ASIWSQQSSRPSLKDGAPEGQDAENTQAVQPEES) are disordered. Residues Ser-664 and Ser-668 each carry the phosphoserine modification. 5 consecutive transmembrane segments (helical) span residues 710 to 730 (SWFF…FYVL), 761 to 781 (LSWY…FGIA), 849 to 869 (LVVS…IPLV), 954 to 974 (AICA…AKTL), and 977 to 997 (GQVG…QWSV). The ABC transmembrane type-1 2 domain maps to 714–1005 (IIFLVLLNMV…SVRQSAEVEN (292 aa)). The region spanning 1041-1274 (IVFDNVNFTY…PESLFYKMVQ (234 aa)) is the ABC transporter 2 domain. An ATP-binding site is contributed by 1075–1082 (GRTGAGKS). The PDZ-binding motif lies at 1322–1325 (ETAL).

As to quaternary structure, interacts (via PDZ-binding motif) with SNX27 (via PDZ domain); this interaction accelerates MRP4 internalization. Requires Mg(2+) as cofactor. In terms of processing, N-glycosylated; leading to substrate-selective effects on its transport activity.

It localises to the basolateral cell membrane. It is found in the apical cell membrane. It catalyses the reaction ATP + H2O + xenobioticSide 1 = ADP + phosphate + xenobioticSide 2.. It carries out the reaction an S-substituted glutathione(in) + ATP + H2O = an S-substituted glutathione(out) + ADP + phosphate + H(+). The catalysed reaction is 17beta-estradiol 17-O-(beta-D-glucuronate)(in) + ATP + H2O = 17beta-estradiol 17-O-(beta-D-glucuronate)(out) + ADP + phosphate + H(+). The enzyme catalyses dehydroepiandrosterone 3-sulfate(in) + ATP + H2O = dehydroepiandrosterone 3-sulfate(out) + ADP + phosphate + H(+). It catalyses the reaction leukotriene C4(in) + ATP + H2O = leukotriene C4(out) + ADP + phosphate + H(+). It carries out the reaction leukotriene B4(in) + ATP + H2O = leukotriene B4(out) + ADP + phosphate + H(+). The catalysed reaction is urate(in) + ATP + H2O = urate(out) + ADP + phosphate + H(+). The enzyme catalyses 3',5'-cyclic GMP(in) + ATP + H2O = 3',5'-cyclic GMP(out) + ADP + phosphate + H(+). It catalyses the reaction 3',5'-cyclic AMP(in) + ATP + H2O = 3',5'-cyclic AMP(out) + ADP + phosphate + H(+). It carries out the reaction prostaglandin E2(in) + ATP + H2O = prostaglandin E2(out) + ADP + phosphate + H(+). The catalysed reaction is prostaglandin E1(in) + ATP + H2O = prostaglandin E1(out) + ADP + phosphate + H(+). The enzyme catalyses glycodeoxycholate(in) + glutathione(in) + ATP + H2O = glycodeoxycholate(out) + glutathione(out) + ADP + phosphate + H(+). It catalyses the reaction cholate(in) + glutathione(in) + ATP + H2O = cholate(out) + glutathione(out) + ADP + phosphate + H(+). It carries out the reaction glycocholate(in) + glutathione(in) + ATP + H2O = glycocholate(out) + glutathione(out) + ADP + phosphate + H(+). The catalysed reaction is taurocholate(in) + glutathione(in) + ATP + H2O = taurocholate(out) + glutathione(out) + ADP + phosphate + H(+). The enzyme catalyses glycochenodeoxycholate(in) + glutathione(in) + ATP + H2O = glycochenodeoxycholate(out) + glutathione(out) + ADP + phosphate + H(+). It catalyses the reaction taurochenodeoxycholate(in) + glutathione(in) + ATP + H2O = taurochenodeoxycholate(out) + glutathione(out) + ADP + phosphate + H(+). It carries out the reaction glycoursodeoxycholate(in) + glutathione(in) + ATP + H2O = glycoursodeoxycholate(out) + glutathione(out) + ADP + phosphate + H(+). The catalysed reaction is tauroursodeoxycholate(in) + glutathione(in) + ATP + H2O = tauroursodeoxycholate(out) + glutathione(out) + ADP + phosphate + H(+). Functionally, ATP-dependent transporter of the ATP-binding cassette (ABC) family that actively extrudes physiological compounds and xenobiotics from cells. Transports a range of endogenous molecules that have a key role in cellular communication and signaling, including cyclic nucleotides such as cyclic AMP (cAMP) and cyclic GMP (cGMP), bile acids, steroid conjugates, urate, and prostaglandins. Also mediates the ATP-dependent efflux of glutathione conjugates such as leukotriene C4 (LTC4) and leukotriene B4 (LTB4). The presence of GSH is necessary for the ATP-dependent transport of LTB4, whereas GSH is not required for the transport of LTC4. Mediates the cotransport of bile acids with reduced glutathione (GSH). Transports a wide range of drugs and their metabolites, including anticancer, antiviral and antibiotics molecules. Confers resistance to anticancer agents. This is ATP-binding cassette sub-family C member 4 from Mus musculus (Mouse).